Here is a 181-residue protein sequence, read N- to C-terminus: Adenine phosphoribosyltransferase (181 aa).

This sequence belongs to the purine/pyrimidine phosphoribosyltransferase family. As to quaternary structure, homodimer.

It is found in the cytoplasm. It catalyses the reaction AMP + diphosphate = 5-phospho-alpha-D-ribose 1-diphosphate + adenine. It participates in purine metabolism; AMP biosynthesis via salvage pathway; AMP from adenine: step 1/1. Its function is as follows. Catalyzes a salvage reaction resulting in the formation of AMP, that is energically less costly than de novo synthesis. In Aeromonas salmonicida (strain A449), this protein is Adenine phosphoribosyltransferase.